Consider the following 310-residue polypeptide: Olfactory receptor 9Q1 (310 aa).

Over 1-25 (MAEMNLTLVTEFLLIAFTEYPEWAL) the chain is Extracellular. An N-linked (GlcNAc...) asparagine glycan is attached at N5. The chain crosses the membrane as a helical span at residues 26–46 (PLFLLFLFMYLITVLGNLEMI). The Cytoplasmic portion of the chain corresponds to 47–54 (ILILMDHQ). Residues 55–75 (LHAPMYFLLSHLAFMDVCYSS) traverse the membrane as a helical segment. The Extracellular portion of the chain corresponds to 76–99 (ITVPQMLAVLLEHGAALSYTRCAA). The cysteines at positions 97 and 189 are disulfide-linked. A helical membrane pass occupies residues 100–120 (QFFLFTFFGSIDCYLLALMAY). The Cytoplasmic segment spans residues 121–139 (DRYLAVCQPLLYVTILTQQ). The helical transmembrane segment at 140 to 160 (ARLSLVAGAYVAGLISALVRT) threads the bilayer. Topologically, residues 161–197 (VSAFTLSFCGTSEIDFIFCDLPPLLKLTCGESYTQEV) are extracellular. A helical membrane pass occupies residues 198–217 (LIIMFAIFVIPASMVVILVS). At 218-236 (YLFIIVAIMGIPAGSQAKT) the chain is on the cytoplasmic side. Residues 237-257 (FSTCTSHLTAVSLFFGTLIFM) traverse the membrane as a helical segment. Residues 258–270 (YLRGNSDQSSEKN) are Extracellular-facing. The chain crosses the membrane as a helical span at residues 271–291 (RVVSVLYTEVIPMLNPLIYSL). The Cytoplasmic segment spans residues 292–310 (RNKEVKEALRKILNRAKLS).

Belongs to the G-protein coupled receptor 1 family.

Its subcellular location is the cell membrane. In terms of biological role, odorant receptor. The chain is Olfactory receptor 9Q1 (OR9Q1) from Homo sapiens (Human).